An 81-amino-acid chain; its full sequence is Putative defensin-like protein 25 (81 aa).

Positions 1–23 (MASLKVFSFALILVLTFSVDVEG) are cleaved as a signal peptide. Disulfide bonds link cysteine 33–cysteine 81, cysteine 43–cysteine 68, cysteine 52–cysteine 77, and cysteine 56–cysteine 79.

It belongs to the DEFL family.

The protein localises to the secreted. This Arabidopsis thaliana (Mouse-ear cress) protein is Putative defensin-like protein 25.